The following is a 150-amino-acid chain: D-aminoacyl-tRNA deacylase (150 aa).

The short motif at 138–139 is the Gly-cisPro motif, important for rejection of L-amino acids element; the sequence is GP.

It belongs to the DTD family. As to quaternary structure, homodimer.

The protein resides in the cytoplasm. It carries out the reaction glycyl-tRNA(Ala) + H2O = tRNA(Ala) + glycine + H(+). The enzyme catalyses a D-aminoacyl-tRNA + H2O = a tRNA + a D-alpha-amino acid + H(+). An aminoacyl-tRNA editing enzyme that deacylates mischarged D-aminoacyl-tRNAs. Also deacylates mischarged glycyl-tRNA(Ala), protecting cells against glycine mischarging by AlaRS. Acts via tRNA-based rather than protein-based catalysis; rejects L-amino acids rather than detecting D-amino acids in the active site. By recycling D-aminoacyl-tRNA to D-amino acids and free tRNA molecules, this enzyme counteracts the toxicity associated with the formation of D-aminoacyl-tRNA entities in vivo and helps enforce protein L-homochirality. The sequence is that of D-aminoacyl-tRNA deacylase from Chlorobium limicola (strain DSM 245 / NBRC 103803 / 6330).